The primary structure comprises 156 residues: Ribonuclease pancreatic (156 aa).

A signal peptide spans Met-1–Gly-26. The substrate site is built by Lys-33 and Arg-36. His-38 (proton acceptor) is an active-site residue. Intrachain disulfides connect Cys-54-Cys-112, Cys-68-Cys-123, Cys-86-Cys-138, and Cys-93-Cys-100. Residue Lys-69–Thr-73 coordinates substrate. N-linked (GlcNAc...) asparagine glycosylation occurs at Asn-90. Residues Lys-94 and Arg-113 each contribute to the substrate site. Residue His-147 is the Proton donor of the active site.

Belongs to the pancreatic ribonuclease family. Monomer. Interacts with and forms tight 1:1 complexes with RNH1. Dimerization of two such complexes may occur. Interaction with RNH1 inhibits this protein. As to expression, pancreas.

It is found in the secreted. It carries out the reaction an [RNA] containing cytidine + H2O = an [RNA]-3'-cytidine-3'-phosphate + a 5'-hydroxy-ribonucleotide-3'-[RNA].. It catalyses the reaction an [RNA] containing uridine + H2O = an [RNA]-3'-uridine-3'-phosphate + a 5'-hydroxy-ribonucleotide-3'-[RNA].. Endonuclease that catalyzes the cleavage of RNA on the 3' side of pyrimidine nucleotides. Acts on single-stranded and double-stranded RNA. The protein is Ribonuclease pancreatic (RNASE1) of Glis glis (Fat dormouse).